The following is a 635-amino-acid chain: tRNA 5-methylaminomethyl-2-thiouridine biosynthesis bifunctional protein MnmC (635 aa).

The tRNA (mnm(5)s(2)U34)-methyltransferase stretch occupies residues Met1–Leu231. Residues Ile249 to Asp635 form an FAD-dependent cmnm(5)s(2)U34 oxidoreductase region.

In the N-terminal section; belongs to the methyltransferase superfamily. tRNA (mnm(5)s(2)U34)-methyltransferase family. The protein in the C-terminal section; belongs to the DAO family. Requires FAD as cofactor.

Its subcellular location is the cytoplasm. The enzyme catalyses 5-aminomethyl-2-thiouridine(34) in tRNA + S-adenosyl-L-methionine = 5-methylaminomethyl-2-thiouridine(34) in tRNA + S-adenosyl-L-homocysteine + H(+). Its function is as follows. Catalyzes the last two steps in the biosynthesis of 5-methylaminomethyl-2-thiouridine (mnm(5)s(2)U) at the wobble position (U34) in tRNA. Catalyzes the FAD-dependent demodification of cmnm(5)s(2)U34 to nm(5)s(2)U34, followed by the transfer of a methyl group from S-adenosyl-L-methionine to nm(5)s(2)U34, to form mnm(5)s(2)U34. The sequence is that of tRNA 5-methylaminomethyl-2-thiouridine biosynthesis bifunctional protein MnmC from Azoarcus sp. (strain BH72).